Reading from the N-terminus, the 127-residue chain is Auxin-responsive protein SAUR76 (127 aa).

The segment at 20 to 40 (SFNTKPNQPPAQTNHSRSSAV) is disordered.

Belongs to the ARG7 family. As to expression, expressed in cotyledons, hypocotyls and roots of young seedlings. Expressed in emerging lateral root, leaves, flowers, stamens and filaments.

It localises to the nucleus. The protein resides in the cytoplasm. The protein localises to the cell membrane. Its function is as follows. May be involved in the regulation of ethylene receptor signaling. Promotes cell expansion and plant growth. Involved in the regulation of cell elongation. This Arabidopsis thaliana (Mouse-ear cress) protein is Auxin-responsive protein SAUR76.